We begin with the raw amino-acid sequence, 70 residues long: Large ribosomal subunit protein eL38 (70 aa).

It belongs to the eukaryotic ribosomal protein eL38 family.

This chain is Large ribosomal subunit protein eL38 (RpL38), found in Timarcha balearica.